Reading from the N-terminus, the 186-residue chain is Elongation factor P (186 aa).

It belongs to the elongation factor P family.

The protein localises to the cytoplasm. It functions in the pathway protein biosynthesis; polypeptide chain elongation. In terms of biological role, involved in peptide bond synthesis. Stimulates efficient translation and peptide-bond synthesis on native or reconstituted 70S ribosomes in vitro. Probably functions indirectly by altering the affinity of the ribosome for aminoacyl-tRNA, thus increasing their reactivity as acceptors for peptidyl transferase. This chain is Elongation factor P, found in Neisseria meningitidis serogroup A / serotype 4A (strain DSM 15465 / Z2491).